The chain runs to 456 residues: RuvB-like helicase 1 (456 aa).

An ATP-binding site is contributed by 70 to 77 (GPPGTGKT).

The protein belongs to the RuvB family. Forms homohexameric rings. May form a dodecamer with rept made of two stacked hexameric rings. Component of the chromatin remodeling Ino80 complex.

Its subcellular location is the nucleus. It catalyses the reaction ATP + H2O = ADP + phosphate + H(+). Its function is as follows. Acts as a transcriptional coactivator in Wg signaling. In terms of biological role, proposed core component of the chromatin remodeling Ino80 complex which is involved in transcriptional regulation, DNA replication and probably DNA repair. The polypeptide is RuvB-like helicase 1 (Aedes aegypti (Yellowfever mosquito)).